Here is a 77-residue protein sequence, read N- to C-terminus: uncharacterized protein (77 aa).

Composition is skewed to basic and acidic residues over residues 1 to 24 and 37 to 58; these read CPVAEEHFLVPAHEARGTQGEDQR and EGPKLGEERPKPEAGALEERGP. The disordered stretch occupies residues 1-77; the sequence is CPVAEEHFLV…RHGPKRKPAK (77 aa). Residues 66 to 77 are compositionally biased toward basic residues; it reads RPRHGPKRKPAK.

This is an uncharacterized protein from Macaca fascicularis (Crab-eating macaque).